The following is a 77-amino-acid chain: Protein OPG195 (77 aa).

A signal peptide spans 1–17 (MRSLIIVLLFPSIIYSM).

This sequence belongs to the chordopoxvirinae B9 protein family.

The chain is Protein OPG195 (OPG197) from Homo sapiens (Human).